Reading from the N-terminus, the 155-residue chain is Urease accessory protein UreE (155 aa).

This sequence belongs to the UreE family.

The protein localises to the cytoplasm. In terms of biological role, involved in urease metallocenter assembly. Binds nickel. Probably functions as a nickel donor during metallocenter assembly. This chain is Urease accessory protein UreE, found in Deinococcus radiodurans (strain ATCC 13939 / DSM 20539 / JCM 16871 / CCUG 27074 / LMG 4051 / NBRC 15346 / NCIMB 9279 / VKM B-1422 / R1).